The sequence spans 86 residues: Small ribosomal subunit protein bS20 (86 aa).

Residues 1–11 (MANIKQQKKRN) are compositionally biased toward basic residues. The interval 1-21 (MANIKQQKKRNKTNEKRRLQN) is disordered.

It belongs to the bacterial ribosomal protein bS20 family.

Functionally, binds directly to 16S ribosomal RNA. In Onion yellows phytoplasma (strain OY-M), this protein is Small ribosomal subunit protein bS20.